An 893-amino-acid polypeptide reads, in one-letter code: Sulfate permease 2 (893 aa).

Positions 1–25 are disordered; the sequence is MSREGYPNFEEVEIPDFQETNNTVP. Topologically, residues 1–131 are cytoplasmic; it reads MSREGYPNFE…VFPIINWLPH (131 aa). Residues 132–152 traverse the membrane as a helical segment; that stretch reads YNFSWFTADLIAGITIGCVLV. At 153 to 163 the chain is on the extracellular side; sequence PQSMSYAQVAT. The helical transmembrane segment at 164–184 threads the bilayer; it reads LPAQYGLYSSFIGAYSYSFFA. The Cytoplasmic segment spans residues 185–188; sequence TSKD. The helical transmembrane segment at 189–209 threads the bilayer; it reads VCIGPVAVMSLQTAKVIADVT. Over 210–221 the chain is Extracellular; that stretch reads AKYPDGDSAITG. A helical membrane pass occupies residues 222-242; sequence PVIATTLALLCGIISAAVGFL. The Cytoplasmic portion of the chain corresponds to 243-244; it reads RL. The helical transmembrane segment at 245–265 threads the bilayer; that stretch reads GFLVELISLNAVAGFMTGSAF. Over 266–305 the chain is Extracellular; the sequence is NILWGQVPALMGYNSLVNTRAATYKVVIETLKHLPDTKLD. Residues 306 to 326 traverse the membrane as a helical segment; the sequence is AVFGLIPLFLLYVWKWWCGTY. Residues 327–350 are Cytoplasmic-facing; sequence GPRLNDRYNSKNPRLHKIIKWTYF. A helical membrane pass occupies residues 351 to 371; it reads YAQASRNGIIIIVFTCIGWAI. Residues 372–399 are Extracellular-facing; sequence TRGKSKSERPISILGSVPSGLKEVGVFH. Residues 400 to 420 form a helical membrane-spanning segment; sequence VPPGLMSKLGPNLPASIIVLL. The Cytoplasmic portion of the chain corresponds to 421–443; sequence LEHIAISKSFGRINDYKVVPDQE. The helical transmembrane segment at 444-464 threads the bilayer; it reads LIAIGVSNLLGTFFNAYPATG. Over 465–483 the chain is Extracellular; sequence SFSRSALKAKCNVRTPLSG. A helical membrane pass occupies residues 484 to 504; that stretch reads LFSGSCVLLALYCLTGAFFYI. Residues 505-532 lie on the Cytoplasmic side of the membrane; it reads PKATLSAVIIHAVSDLLASYQTTWNFWK. The helical transmembrane segment at 533-551 threads the bilayer; the sequence is MNPLDFICFIVTVLITVFA. Topologically, residues 552–559 are extracellular; that stretch reads SIEDGIYF. The chain crosses the membrane as a helical span at residues 560–580; it reads AMCWSCAMLILKVAFPAGKFL. Over 581-893 the chain is Cytoplasmic; the sequence is GRVEVAEVTD…DIPDFAKWDI (313 aa). Residues 676 to 854 form the STAS domain; the sequence is DVQILPPPDG…SIVAGHTSYH (179 aa).

This sequence belongs to the SLC26A/SulP transporter (TC 2.A.53) family.

Its subcellular location is the membrane. Functionally, high affinity uptake of sulfate into the cell. In Saccharomyces cerevisiae (strain ATCC 204508 / S288c) (Baker's yeast), this protein is Sulfate permease 2 (SUL2).